The primary structure comprises 379 residues: Cytochrome b (379 aa).

The next 4 membrane-spanning stretches (helical) occupy residues 33 to 53, 77 to 98, 113 to 133, and 178 to 198; these read FGSL…FLAM, WLIR…YLHI, WNIG…GYVL, and FFAF…IHLL. Heme b is bound by residues His83 and His97. Residues His182 and His196 each contribute to the heme b site. An a ubiquinone-binding site is contributed by His201. Helical transmembrane passes span 226–246, 288–308, 320–340, and 347–367; these read YKDL…ALFY, LGGV…PILH, ASQL…WIGG, and YIII…VLNP.

It belongs to the cytochrome b family. The cytochrome bc1 complex contains 3 respiratory subunits (MT-CYB, CYC1 and UQCRFS1), 2 core proteins (UQCRC1 and UQCRC2) and probably 6 low-molecular weight proteins. Heme b is required as a cofactor.

Its subcellular location is the mitochondrion inner membrane. Functionally, component of the ubiquinol-cytochrome c reductase complex (complex III or cytochrome b-c1 complex) that is part of the mitochondrial respiratory chain. The b-c1 complex mediates electron transfer from ubiquinol to cytochrome c. Contributes to the generation of a proton gradient across the mitochondrial membrane that is then used for ATP synthesis. The sequence is that of Cytochrome b (mt-cyb) from Anguilla reinhardtii (Speckled longfin eel).